Reading from the N-terminus, the 300-residue chain is Serine/arginine-rich splicing factor SR34A (300 aa).

Residues 7–82 enclose the RRM 1 domain; it reads RSIYVGNLPG…CRLRVELAHG (76 aa). Disordered regions lie at residues 81–110 and 198–300; these read HGGRGQSSSDRRGGYGGGGSGYGGGGGGGG and YESS…EGSV. Positions 94 to 110 are enriched in gly residues; the sequence is GYGGGGSGYGGGGGGGG. In terms of domain architecture, RRM 2 spans 122-200; sequence FRVIVRGLPS…GFIRVKKYES (79 aa). Residues 203–239 show a composition bias toward basic residues; sequence SRSRSPSRSRSRSRSRSRSRGRGRSHSRSRSLSRSKS. 8 positions are modified to phosphoserine: Ser207, Ser209, Ser231, Ser233, Ser239, Ser259, Ser275, and Ser285. Low complexity predominate over residues 253-262; it reads SRSISKSRSP. Residues 275-287 show a composition bias toward basic residues; that stretch reads SRSKSRSRSRSRS.

The protein belongs to the splicing factor SR family. SR subfamily. Component of the spliceosome.

Its subcellular location is the nucleus speckle. It is found in the nucleus. It localises to the nucleoplasm. Probably involved in intron recognition and spliceosome assembly. The protein is Serine/arginine-rich splicing factor SR34A (SR34A) of Arabidopsis thaliana (Mouse-ear cress).